The primary structure comprises 322 residues: 1-aminocyclopropane-1-carboxylate oxidase 1 (322 aa).

The Fe2OG dioxygenase domain maps to 159 to 259 (PTFGTKVSSY…RMSIASFYNP (101 aa)). Residues His-183, Asp-185, and His-240 each coordinate Fe cation.

The protein belongs to the iron/ascorbate-dependent oxidoreductase family. Requires Fe cation as cofactor.

The catalysed reaction is 1-aminocyclopropane-1-carboxylate + L-ascorbate + O2 = ethene + L-dehydroascorbate + hydrogen cyanide + CO2 + 2 H2O. It functions in the pathway alkene biosynthesis; ethylene biosynthesis via S-adenosyl-L-methionine; ethylene from S-adenosyl-L-methionine: step 2/2. The chain is 1-aminocyclopropane-1-carboxylate oxidase 1 (ACO1) from Oryza sativa subsp. japonica (Rice).